The chain runs to 284 residues: 2-dehydro-3-deoxyphosphooctonate aldolase (284 aa).

This sequence belongs to the KdsA family.

It localises to the cytoplasm. The catalysed reaction is D-arabinose 5-phosphate + phosphoenolpyruvate + H2O = 3-deoxy-alpha-D-manno-2-octulosonate-8-phosphate + phosphate. The protein operates within carbohydrate biosynthesis; 3-deoxy-D-manno-octulosonate biosynthesis; 3-deoxy-D-manno-octulosonate from D-ribulose 5-phosphate: step 2/3. It participates in bacterial outer membrane biogenesis; lipopolysaccharide biosynthesis. This is 2-dehydro-3-deoxyphosphooctonate aldolase from Paraburkholderia xenovorans (strain LB400).